Consider the following 218-residue polypeptide: Pyridoxine/pyridoxamine 5'-phosphate oxidase (218 aa).

Substrate contacts are provided by residues 12 to 15 and arginine 70; that span reads RLAY. FMN-binding positions include 65-70, 80-81, lysine 87, and glutamine 109; these read RTVLLR and YT. Substrate is bound by residues tyrosine 127, arginine 131, and serine 135. Residues 145 to 146 and tryptophan 191 contribute to the FMN site; that span reads QS. 197–199 is a binding site for substrate; sequence RLH. Arginine 201 lines the FMN pocket.

The protein belongs to the pyridoxamine 5'-phosphate oxidase family. Homodimer. FMN is required as a cofactor.

It carries out the reaction pyridoxamine 5'-phosphate + O2 + H2O = pyridoxal 5'-phosphate + H2O2 + NH4(+). The catalysed reaction is pyridoxine 5'-phosphate + O2 = pyridoxal 5'-phosphate + H2O2. The protein operates within cofactor metabolism; pyridoxal 5'-phosphate salvage; pyridoxal 5'-phosphate from pyridoxamine 5'-phosphate: step 1/1. Its pathway is cofactor metabolism; pyridoxal 5'-phosphate salvage; pyridoxal 5'-phosphate from pyridoxine 5'-phosphate: step 1/1. Its function is as follows. Catalyzes the oxidation of either pyridoxine 5'-phosphate (PNP) or pyridoxamine 5'-phosphate (PMP) into pyridoxal 5'-phosphate (PLP). The sequence is that of Pyridoxine/pyridoxamine 5'-phosphate oxidase from Deinococcus geothermalis (strain DSM 11300 / CIP 105573 / AG-3a).